A 1255-amino-acid polypeptide reads, in one-letter code: Kinesin-related protein 7 (1255 aa).

Residues Met1 to Ser26 form a disordered region. Residues Asn28–Ile349 form the Kinesin motor domain. Gly107 to Thr114 serves as a coordination point for ATP. Composition is skewed to low complexity over residues Asn454–Asn491, Asn545–Gly563, and His583–Ser603. 6 disordered regions span residues Asn454–Phe503, Gly530–Tyr564, Asp579–Asn628, Glu661–Thr686, Glu795–Ile864, and Ile915–Lys934. Residues Val608 to Asn628 are compositionally biased toward polar residues. The span at Gly813–Glu834 shows a compositional bias: acidic residues. The segment covering Ile915–Ser932 has biased composition (low complexity). A helical transmembrane segment spans residues Ile945–Leu965. Residues Asn1088 to Leu1223 adopt a coiled-coil conformation.

It belongs to the TRAFAC class myosin-kinesin ATPase superfamily. Kinesin family.

Its subcellular location is the nucleus membrane. It localises to the cytoplasm. It is found in the cytoskeleton. Functionally, microtubule-associated force-producing protein that plays a role in organelle transport. Its motor activity is directed toward the microtubule's plus end. May be involved in cell motility or cell differentiation during prestalk formation. This Dictyostelium discoideum (Social amoeba) protein is Kinesin-related protein 7 (kif7).